The following is a 180-amino-acid chain: Large ribosomal subunit protein uL5 (180 aa).

The protein belongs to the universal ribosomal protein uL5 family. As to quaternary structure, part of the 50S ribosomal subunit; part of the 5S rRNA/L5/L18/L25 subcomplex. Contacts the 5S rRNA and the P site tRNA. Forms a bridge to the 30S subunit in the 70S ribosome.

This is one of the proteins that bind and probably mediate the attachment of the 5S RNA into the large ribosomal subunit, where it forms part of the central protuberance. In the 70S ribosome it contacts protein S13 of the 30S subunit (bridge B1b), connecting the 2 subunits; this bridge is implicated in subunit movement. Contacts the P site tRNA; the 5S rRNA and some of its associated proteins might help stabilize positioning of ribosome-bound tRNAs. The protein is Large ribosomal subunit protein uL5 of Stenotrophomonas maltophilia (strain K279a).